A 384-amino-acid polypeptide reads, in one-letter code: Flap endonuclease 1 (384 aa).

An N-domain region spans residues 1–108; it reads MGIHKLMDLL…GELARRQKAK (108 aa). Asp34 lines the Mg(2+) pocket. Residue Arg74 participates in DNA binding. The Mg(2+) site is built by Asp90, Glu162, Glu164, Asp183, and Asp185. Positions 126-254 are I-domain; that stretch reads EALKQEQRNL…VNAFKLITEH (129 aa). Glu162 contacts DNA. DNA contacts are provided by Gly232 and Asp234. Position 234 (Asp234) interacts with Mg(2+). The segment at 340–384 is disordered; that stretch reads AKEHKGSQTRLNDFFKVQPKDTSSTSKASKKPTNTKSANKKGGKK. The interval 346–354 is interaction with PCNA; that stretch reads SQTRLNDFF. Positions 359–376 are enriched in low complexity; it reads KDTSSTSKASKKPTNTKS.

This sequence belongs to the XPG/RAD2 endonuclease family. FEN1 subfamily. As to quaternary structure, interacts with PCNA. Three molecules of FEN1 bind to one PCNA trimer with each molecule binding to one PCNA monomer. PCNA stimulates the nuclease activity without altering cleavage specificity. Mg(2+) serves as cofactor. Post-translationally, phosphorylated. Phosphorylation upon DNA damage induces relocalization to the nuclear plasma.

The protein localises to the nucleus. Its subcellular location is the nucleolus. It is found in the nucleoplasm. The protein resides in the mitochondrion. In terms of biological role, structure-specific nuclease with 5'-flap endonuclease and 5'-3' exonuclease activities involved in DNA replication and repair. During DNA replication, cleaves the 5'-overhanging flap structure that is generated by displacement synthesis when DNA polymerase encounters the 5'-end of a downstream Okazaki fragment. It enters the flap from the 5'-end and then tracks to cleave the flap base, leaving a nick for ligation. Also involved in the long patch base excision repair (LP-BER) pathway, by cleaving within the apurinic/apyrimidinic (AP) site-terminated flap. Acts as a genome stabilization factor that prevents flaps from equilibrating into structures that lead to duplications and deletions. Also possesses 5'-3' exonuclease activity on nicked or gapped double-stranded DNA, and exhibits RNase H activity. Also involved in replication and repair of rDNA and in repairing mitochondrial DNA. The chain is Flap endonuclease 1 from Tetrahymena thermophila (strain SB210).